We begin with the raw amino-acid sequence, 414 residues long: Serine/threonine transporter SstT (414 aa).

8 helical membrane-spanning segments follow: residues 16–36 (GSLV…AWIS), 46–66 (LGTL…LMLV), 84–104 (ILFL…VFSF), 143–163 (ALLN…GFAL), 180–200 (AVTF…FGLV), 219–239 (LVVL…LLVF), 300–320 (MAGA…TLGV), and 332–352 (VVAS…LLLI).

This sequence belongs to the dicarboxylate/amino acid:cation symporter (DAACS) (TC 2.A.23) family.

Its subcellular location is the cell inner membrane. The catalysed reaction is L-serine(in) + Na(+)(in) = L-serine(out) + Na(+)(out). It carries out the reaction L-threonine(in) + Na(+)(in) = L-threonine(out) + Na(+)(out). Functionally, involved in the import of serine and threonine into the cell, with the concomitant import of sodium (symport system). The sequence is that of Serine/threonine transporter SstT from Salmonella newport (strain SL254).